A 594-amino-acid chain; its full sequence is NADH-quinone oxidoreductase subunit C/D (594 aa).

Residues 1–185 (MTTGSALYIP…DPFSLNLAKQ (185 aa)) form an NADH dehydrogenase I subunit C region. Residues 209–594 (DYMFLNLGPN…IDFVMADVDR (386 aa)) are NADH dehydrogenase I subunit D.

It in the N-terminal section; belongs to the complex I 30 kDa subunit family. In the C-terminal section; belongs to the complex I 49 kDa subunit family. NDH-1 is composed of 13 different subunits. Subunits NuoB, CD, E, F, and G constitute the peripheral sector of the complex.

The protein resides in the cell inner membrane. The enzyme catalyses a quinone + NADH + 5 H(+)(in) = a quinol + NAD(+) + 4 H(+)(out). In terms of biological role, NDH-1 shuttles electrons from NADH, via FMN and iron-sulfur (Fe-S) centers, to quinones in the respiratory chain. The immediate electron acceptor for the enzyme in this species is believed to be ubiquinone. Couples the redox reaction to proton translocation (for every two electrons transferred, four hydrogen ions are translocated across the cytoplasmic membrane), and thus conserves the redox energy in a proton gradient. The protein is NADH-quinone oxidoreductase subunit C/D of Pseudomonas fluorescens (strain SBW25).